The chain runs to 333 residues: Ketol-acid reductoisomerase (NAD(P)(+)) (333 aa).

The region spanning 2 to 182 (AKIYYDEDAS…GATRAGVIET (181 aa)) is the KARI N-terminal Rossmann domain. Residues 25-28 (YGSQ), Ser-51, and 83-86 (DTVQ) contribute to the NADP(+) site. The active site involves His-108. Gly-134 is an NADP(+) binding site. One can recognise a KARI C-terminal knotted domain in the interval 183-327 (TFREETETDL…KELRQMMPWL (145 aa)). Asp-191, Glu-195, Glu-227, and Glu-231 together coordinate Mg(2+). A substrate-binding site is contributed by Ser-252.

Belongs to the ketol-acid reductoisomerase family. The cofactor is Mg(2+).

The catalysed reaction is (2R)-2,3-dihydroxy-3-methylbutanoate + NAD(+) = (2S)-2-acetolactate + NADH + H(+). It carries out the reaction (2R)-2,3-dihydroxy-3-methylbutanoate + NADP(+) = (2S)-2-acetolactate + NADPH + H(+). Its pathway is amino-acid biosynthesis; L-isoleucine biosynthesis; L-isoleucine from 2-oxobutanoate: step 2/4. It functions in the pathway amino-acid biosynthesis; L-valine biosynthesis; L-valine from pyruvate: step 2/4. Involved in the biosynthesis of branched-chain amino acids (BCAA). Catalyzes an alkyl-migration followed by a ketol-acid reduction of (S)-2-acetolactate (S2AL) to yield (R)-2,3-dihydroxy-isovalerate. In the isomerase reaction, S2AL is rearranged via a Mg-dependent methyl migration to produce 3-hydroxy-3-methyl-2-ketobutyrate (HMKB). In the reductase reaction, this 2-ketoacid undergoes a metal-dependent reduction by NADPH or NADH to yield (R)-2,3-dihydroxy-isovalerate. The sequence is that of Ketol-acid reductoisomerase (NAD(P)(+)) from Hydrogenobaculum sp. (strain Y04AAS1).